A 584-amino-acid chain; its full sequence is ATP-dependent RNA helicase MRH4, mitochondrial (584 aa).

The N-terminal 49 residues, 1-49 (MQPVFSRFPYASKSGFISLASRGYAVSRNSGSSIKSNLRSKPRADTRWN), are a transit peptide targeting the mitochondrion. A compositionally biased stretch (polar residues) spans 28 to 39 (RNSGSSIKSNLR). The segment at 28–92 (RNSGSSIKSN…QTQQQFQYGE (65 aa)) is disordered. Residues 63–79 (GKGDHRSHSRSDSRAKP) are compositionally biased toward basic and acidic residues. The Q motif signature appears at 162–169 (HLKPSPIQ). Residues 179–366 (TLMDPQLQVR…TRLFPTVGVI (188 aa)) enclose the Helicase ATP-binding domain. Residue 192-199 (AETGSGKT) coordinates ATP. A DEAD box motif is present at residues 314 to 317 (DEAD). The 188-residue stretch at 397–584 (ALAQILYSIN…SIVSKNVSIS (188 aa)) folds into the Helicase C-terminal domain.

This sequence belongs to the DEAD box helicase family. MRH4 subfamily.

The protein localises to the mitochondrion. The catalysed reaction is ATP + H2O = ADP + phosphate + H(+). In terms of biological role, ATP-binding RNA helicase involved in mitochondrial RNA metabolism. Required for maintenance of mitochondrial DNA. The sequence is that of ATP-dependent RNA helicase MRH4, mitochondrial (MRH4) from Kluyveromyces lactis (strain ATCC 8585 / CBS 2359 / DSM 70799 / NBRC 1267 / NRRL Y-1140 / WM37) (Yeast).